The chain runs to 1078 residues: Isoleucine--tRNA ligase (1078 aa).

The 'HIGH' region signature appears at 52–62; it reads PTANGKPALHH. Positions 637–641 match the 'KMSKS' region motif; that stretch reads KMSKS. Lys-640 lines the ATP pocket.

It belongs to the class-I aminoacyl-tRNA synthetase family. IleS type 2 subfamily. In terms of assembly, monomer. The cofactor is Zn(2+).

It is found in the cytoplasm. It carries out the reaction tRNA(Ile) + L-isoleucine + ATP = L-isoleucyl-tRNA(Ile) + AMP + diphosphate. Its function is as follows. Catalyzes the attachment of isoleucine to tRNA(Ile). As IleRS can inadvertently accommodate and process structurally similar amino acids such as valine, to avoid such errors it has two additional distinct tRNA(Ile)-dependent editing activities. One activity is designated as 'pretransfer' editing and involves the hydrolysis of activated Val-AMP. The other activity is designated 'posttransfer' editing and involves deacylation of mischarged Val-tRNA(Ile). This is Isoleucine--tRNA ligase from Deinococcus radiodurans (strain ATCC 13939 / DSM 20539 / JCM 16871 / CCUG 27074 / LMG 4051 / NBRC 15346 / NCIMB 9279 / VKM B-1422 / R1).